We begin with the raw amino-acid sequence, 421 residues long: F-box protein At2g17690 (421 aa).

An F-box domain is found at 2-50 (GDWSKLPEELLGLIALRLYSVIELIRFRSICKSWRSSASGVNKNHSLSS).

Involved in heat stress response. Contributes to recovery from heat stress. In Arabidopsis thaliana (Mouse-ear cress), this protein is F-box protein At2g17690.